A 467-amino-acid polypeptide reads, in one-letter code: MVAVRASRRKRASATDLYKTCKAAGTCPPDVIPKIEGSTLADKILQWSGLGIFLGGLGIGTGTGTGGRTGYIPLGGGGRPSVVDIGPTRPPIIIEPVGPTEPSIVTLVEESSIIQSGSPFPNFSGGDGFEVTTSSTTTPAVLDITPSPGTVHVTSTNIQNPLYIEPPVDIPQSGEALGHIFTSTSTAGTHSYEEIPMEVFASNTSSGSKPISSTPIPGIRRVAAPRLYSKAYQQVKVTDPNFISKPSTFITFDNPAYEPMDTTLTFSADSHVAPDPDFLDIIALHRPALTSRRGTVRFSRLGQKATLKTRSGKQIGAKVHYYHDISPIHATEEAIELQPLITSEQHSTPLFDVYADADPAPTFTFPSTTPTTIPRFSSTIFSTTSSAPLNVTIPLSTSFDIPIYNGPDIYAPVPSSTWPYIPPPPTTMSHSVVAQGGNYYLWPYIYLIHKRRRKRVPCFFSDGLAAY.

A Nuclear localization signal motif is present at residues 1–12; that stretch reads MVAVRASRRKRA. Cys21 and Cys27 are oxidised to a cystine. The short motif at 447 to 456 is the Nuclear localization signal element; that stretch reads LIHKRRRKRV.

Belongs to the papillomaviridae L2 protein family. As to quaternary structure, interacts with major capsid protein L1. Interacts with E2; this interaction inhibits E2 transcriptional activity but not the DNA replication function E2. Interacts with host GADD45GIP1. Interacts with host HSPA8; this interaction is required for L2 nuclear translocation. Interacts with host importins KPNB2 and KPNB3. Forms a complex with importin alpha2-beta1 heterodimers via interaction with the importin alpha2 adapter. Interacts with host DYNLT1; this interaction is essential for virus intracellular transport during entry. Interacts (via C-terminus) with host retromer subunits VPS35 and VPS29. In terms of processing, highly phosphorylated.

The protein resides in the virion. It is found in the host nucleus. Its subcellular location is the host early endosome. It localises to the host Golgi apparatus. In terms of biological role, minor protein of the capsid that localizes along the inner surface of the virion, within the central cavities beneath the L1 pentamers. Plays a role in capsid stabilization through interaction with the major capsid protein L1. Once the virion enters the host cell, L2 escorts the genomic DNA into the nucleus by promoting escape from the endosomal compartments and traffic through the host Golgi network. Mechanistically, the C-terminus of L2 possesses a cell-penetrating peptide that protudes from the host endosome, interacts with host cytoplasmic retromer cargo and thereby mediates the capsid delivery to the host trans-Golgi network. Plays a role through its interaction with host dynein in the intracellular microtubule-dependent transport of viral capsid toward the nucleus. Mediates the viral genome import into the nucleus through binding to host importins. Once within the nucleus, L2 localizes viral genomes to host PML bodies in order to activate early gene expression for establishment of infection. Later on, promotes late gene expression by interacting with the viral E2 protein and by inhibiting its transcriptional activation functions. During virion assembly, encapsidates the genome by direct interaction with the viral DNA. The sequence is that of Minor capsid protein L2 from Human papillomavirus 69.